A 77-amino-acid polypeptide reads, in one-letter code: MDPIILAEINGNIATVGYGLAAIGPGIGVGIVAGKTVEAMARQPEMAGSLRTTMFLGIAFSEALALIGLATYFIFTN.

A run of 2 helical transmembrane segments spans residues 13–33 (IATV…GIVA) and 55–75 (FLGI…YFIF).

Belongs to the ATPase C chain family. In terms of assembly, F-type ATPases have 2 components, F(1) - the catalytic core - and F(0) - the membrane proton channel. F(1) has five subunits: alpha(3), beta(3), gamma(1), delta(1), epsilon(1). F(0) has three main subunits: a(1), b(2) and c(10-14). The alpha and beta chains form an alternating ring which encloses part of the gamma chain. F(1) is attached to F(0) by a central stalk formed by the gamma and epsilon chains, while a peripheral stalk is formed by the delta and b chains.

The protein resides in the cell membrane. Functionally, f(1)F(0) ATP synthase produces ATP from ADP in the presence of a proton or sodium gradient. F-type ATPases consist of two structural domains, F(1) containing the extramembraneous catalytic core and F(0) containing the membrane proton channel, linked together by a central stalk and a peripheral stalk. During catalysis, ATP synthesis in the catalytic domain of F(1) is coupled via a rotary mechanism of the central stalk subunits to proton translocation. Key component of the F(0) channel; it plays a direct role in translocation across the membrane. A homomeric c-ring of between 10-14 subunits forms the central stalk rotor element with the F(1) delta and epsilon subunits. The polypeptide is ATP synthase subunit c (Clavibacter michiganensis subsp. michiganensis (strain NCPPB 382)).